A 150-amino-acid chain; its full sequence is Small ribosomal subunit protein uS11y (150 aa).

The interval 129–150 (EDVTPVPTDSTRRKGGRRGRRL) is disordered. A compositionally biased stretch (basic residues) spans 141–150 (RKGGRRGRRL).

The protein belongs to the universal ribosomal protein uS11 family.

The chain is Small ribosomal subunit protein uS11y from Zea mays (Maize).